A 293-amino-acid polypeptide reads, in one-letter code: ATP synthase gamma chain (293 aa).

The protein belongs to the ATPase gamma chain family. As to quaternary structure, F-type ATPases have 2 components, CF(1) - the catalytic core - and CF(0) - the membrane proton channel. CF(1) has five subunits: alpha(3), beta(3), gamma(1), delta(1), epsilon(1). CF(0) has three main subunits: a, b and c.

Its subcellular location is the cell membrane. In terms of biological role, produces ATP from ADP in the presence of a proton gradient across the membrane. The gamma chain is believed to be important in regulating ATPase activity and the flow of protons through the CF(0) complex. This is ATP synthase gamma chain from Streptococcus agalactiae serotype Ia (strain ATCC 27591 / A909 / CDC SS700).